Consider the following 601-residue polypeptide: NAD-dependent malic enzyme 59 kDa isoform, mitochondrial (601 aa).

The transit peptide at 1–18 (MWRVARSAASTFRRTRRL) directs the protein to the mitochondrion. Tyr-129 (proton donor) is an active-site residue. Arg-182 provides a ligand contact to NAD(+). The Proton acceptor role is filled by Lys-200. A divalent metal cation contacts are provided by Glu-271, Asp-272, and Asp-295. Asp-295 and Asn-444 together coordinate NAD(+).

Belongs to the malic enzymes family. In terms of assembly, heterodimer of two related subunits. Requires Mg(2+) as cofactor. The cofactor is Mn(2+).

The protein resides in the mitochondrion matrix. The catalysed reaction is (S)-malate + NAD(+) = pyruvate + CO2 + NADH. The chain is NAD-dependent malic enzyme 59 kDa isoform, mitochondrial from Solanum tuberosum (Potato).